The primary structure comprises 40 residues: Dolichyl-diphosphooligosaccharide--protein glycosyltransferase subunit 4 (40 aa).

Residues 1–4 lie on the Lumenal side of the membrane; that stretch reads MITD. Residues 5–25 traverse the membrane as a helical segment; that stretch reads VQLAIFSNVLGVFLFLLVVAY. Over 26–40 the chain is Cytoplasmic; sequence HYINANTGKPIPKAK.

The protein belongs to the OST4 family. As to quaternary structure, component of the oligosaccharyltransferase (OST) complex.

Its subcellular location is the endoplasmic reticulum membrane. Its function is as follows. Subunit of the oligosaccharyl transferase (OST) complex that catalyzes the initial transfer of a defined glycan (Glc(3)Man(9)GlcNAc(2) in eukaryotes) from the lipid carrier dolichol-pyrophosphate to an asparagine residue within an Asn-X-Ser/Thr consensus motif in nascent polypeptide chains, the first step in protein N-glycosylation. N-glycosylation occurs cotranslationally and the complex associates with the Sec61 complex at the channel-forming translocon complex that mediates protein translocation across the endoplasmic reticulum (ER). All subunits are required for a maximal enzyme activity. This Drosophila ananassae (Fruit fly) protein is Dolichyl-diphosphooligosaccharide--protein glycosyltransferase subunit 4.